The following is a 539-amino-acid chain: MDNKRVILAVALSFAVLLGWQFLFPPQPQQPAPAQQEQTAQPNQAVDSSVAGPVSNQLPDPASTSAIVSAKGTRLTVETPLYSAVINSQGGLLESFKLKKFKATIDADSPDVDMVGTNALDKAPMGLILNGIATWANGVWGYEGANLNLEGDKLGTLIFRGDVEGFRIERRLTFHADNYLIDEDVRVINKSNPSGMGRIAFTTATKSLTAADDRYNPTRIAWFNAEGLVEESDRDTLSETGVTESGKVEWAAIDSNYFILALVPGADSVTMKGKLQDDIFRIAAEQNVSFDKDIERKLACSYYFGPMDAQLMAKVPGELSKAIDFGWFDIIAKPLVVALEWFHQYTNNYGIAIILLTIVIKILFWPLSHKSYKSMEQMKRLQPMMAKLREKHGDDREALNKEMMQLYKTYNVNPAGGCLPMLLQIPVFFGLYKALMGTVALRHADFVHFLPFTDIVWLADLSAKDPLYITPIVMGATMFLQQKMTPSAGDPTQQKIMMFLPLVFTFMFLNFPSGLVVYWMVNNVLSIAQQWMMMRNVKN.

A helical transmembrane segment spans residues 6–26; the sequence is VILAVALSFAVLLGWQFLFPP. The tract at residues 28-63 is disordered; the sequence is PQQPAPAQQEQTAQPNQAVDSSVAGPVSNQLPDPAS. Residues 32-45 are compositionally biased toward low complexity; sequence APAQQEQTAQPNQA. Polar residues predominate over residues 54 to 63; that stretch reads VSNQLPDPAS. Transmembrane regions (helical) follow at residues 349–369, 421–441, and 496–516; these read YGIA…PLSH, MLLQ…TVAL, and IMMF…SGLV.

It belongs to the OXA1/ALB3/YidC family. Type 1 subfamily. Interacts with the Sec translocase complex via SecD. Specifically interacts with transmembrane segments of nascent integral membrane proteins during membrane integration.

The protein resides in the cell inner membrane. Its function is as follows. Required for the insertion and/or proper folding and/or complex formation of integral membrane proteins into the membrane. Involved in integration of membrane proteins that insert both dependently and independently of the Sec translocase complex, as well as at least some lipoproteins. Aids folding of multispanning membrane proteins. The sequence is that of Membrane protein insertase YidC from Maridesulfovibrio salexigens (strain ATCC 14822 / DSM 2638 / NCIMB 8403 / VKM B-1763) (Desulfovibrio salexigens).